The primary structure comprises 224 residues: Cytidylate kinase (224 aa).

An ATP-binding site is contributed by 11-19; it reads GPAAAGKST.

This sequence belongs to the cytidylate kinase family. Type 1 subfamily.

It is found in the cytoplasm. The catalysed reaction is CMP + ATP = CDP + ADP. It catalyses the reaction dCMP + ATP = dCDP + ADP. This Listeria monocytogenes serotype 4a (strain HCC23) protein is Cytidylate kinase.